Consider the following 287-residue polypeptide: Inhibitory synaptic factor 1 (287 aa).

The interval 1–22 (MSQSRAPAREPSETPSQREQIR) is disordered. Residues 25–58 (MKMVIQQLEGILKELKDVAHELREVVGQIDKLTS) are a coiled coil. 2 disordered regions span residues 113 to 174 (RRSA…GTRE) and 189 to 287 (CDDD…NKDL). Positions 153–167 (EEASSSTHSQSQKTS) are enriched in low complexity. Acidic residues predominate over residues 189-209 (CDDDEDEDEDEDGRDEEEDKL). A compositionally biased stretch (polar residues) spans 259–274 (RNSSTQTVSDKSTQTL).

It belongs to the INSYN1 family.

It is found in the postsynaptic density. Functionally, may be a component of the protein machinery at the inhibitory synapses, probably acting as a scaffold. The protein is Inhibitory synaptic factor 1 of Danio rerio (Zebrafish).